A 38-amino-acid polypeptide reads, in one-letter code: Large ribosomal subunit protein bL36A (38 aa).

It belongs to the bacterial ribosomal protein bL36 family.

This is Large ribosomal subunit protein bL36A from Pectobacterium atrosepticum (strain SCRI 1043 / ATCC BAA-672) (Erwinia carotovora subsp. atroseptica).